Here is a 73-residue protein sequence, read N- to C-terminus: Probable minor pilin MMP0528 (73 aa).

The propeptide occupies 1 to 10 (MLKKLYSKKG). The QXSXEXXXL motif lies at 11–19 (QVSMEMGIL).

In terms of processing, the N-terminus is probably cleaved by the prepilin peptidase EppA, which recognizes the class III signal sequence.

The protein resides in the secreted. It localises to the cell surface. Its subcellular location is the fimbrium. This Methanococcus maripaludis (strain DSM 14266 / JCM 13030 / NBRC 101832 / S2 / LL) protein is Probable minor pilin MMP0528.